The primary structure comprises 511 residues: Maturase K (511 aa).

The protein belongs to the intron maturase 2 family. MatK subfamily.

The protein localises to the plastid. It localises to the chloroplast. In terms of biological role, usually encoded in the trnK tRNA gene intron. Probably assists in splicing its own and other chloroplast group II introns. This is Maturase K from Brachypodium distachyon (Purple false brome).